A 528-amino-acid chain; its full sequence is Putative galacturonosyltransferase 2 (528 aa).

Belongs to the glycosyltransferase 8 family.

It participates in glycan metabolism; pectin biosynthesis. Its function is as follows. May be involved in pectin and/or xylans biosynthesis in cell walls. This Arabidopsis thaliana (Mouse-ear cress) protein is Putative galacturonosyltransferase 2 (GAUT2).